Reading from the N-terminus, the 120-residue chain is ATP-dependent Clp protease adapter protein ClpS (120 aa).

The protein belongs to the ClpS family. As to quaternary structure, binds to the N-terminal domain of the chaperone ClpA.

In terms of biological role, involved in the modulation of the specificity of the ClpAP-mediated ATP-dependent protein degradation. In Pseudomonas savastanoi pv. phaseolicola (strain 1448A / Race 6) (Pseudomonas syringae pv. phaseolicola (strain 1448A / Race 6)), this protein is ATP-dependent Clp protease adapter protein ClpS.